The primary structure comprises 99 residues: Aspartyl/glutamyl-tRNA(Asn/Gln) amidotransferase subunit C (99 aa).

This sequence belongs to the GatC family. Heterotrimer of A, B and C subunits.

The enzyme catalyses L-glutamyl-tRNA(Gln) + L-glutamine + ATP + H2O = L-glutaminyl-tRNA(Gln) + L-glutamate + ADP + phosphate + H(+). It carries out the reaction L-aspartyl-tRNA(Asn) + L-glutamine + ATP + H2O = L-asparaginyl-tRNA(Asn) + L-glutamate + ADP + phosphate + 2 H(+). Functionally, allows the formation of correctly charged Asn-tRNA(Asn) or Gln-tRNA(Gln) through the transamidation of misacylated Asp-tRNA(Asn) or Glu-tRNA(Gln) in organisms which lack either or both of asparaginyl-tRNA or glutaminyl-tRNA synthetases. The reaction takes place in the presence of glutamine and ATP through an activated phospho-Asp-tRNA(Asn) or phospho-Glu-tRNA(Gln). This is Aspartyl/glutamyl-tRNA(Asn/Gln) amidotransferase subunit C from Burkholderia thailandensis (strain ATCC 700388 / DSM 13276 / CCUG 48851 / CIP 106301 / E264).